The following is a 354-amino-acid chain: tRNA-specific 2-thiouridylase MnmA (354 aa).

ATP is bound by residues 6–13 (LLSGGVDS) and Leu-33. The active-site Nucleophile is Cys-100. A disulfide bridge links Cys-100 with Cys-195. Gly-123 contributes to the ATP binding site. The interval 145-147 (KDQ) is interaction with tRNA. Catalysis depends on Cys-195, which acts as the Cysteine persulfide intermediate.

It belongs to the MnmA/TRMU family.

Its subcellular location is the cytoplasm. The catalysed reaction is S-sulfanyl-L-cysteinyl-[protein] + uridine(34) in tRNA + AH2 + ATP = 2-thiouridine(34) in tRNA + L-cysteinyl-[protein] + A + AMP + diphosphate + H(+). Catalyzes the 2-thiolation of uridine at the wobble position (U34) of tRNA, leading to the formation of s(2)U34. This chain is tRNA-specific 2-thiouridylase MnmA, found in Borrelia recurrentis (strain A1).